The sequence spans 395 residues: Aurora kinase A (395 aa).

Residues 1–114 are disordered; it reads MDRCKENCVS…QASLQKTEDT (114 aa). Polar residues-rich tracts occupy residues 29 to 60 and 84 to 99; these read QIPS…SQAQ and RLNN…ASGN. 2 positions are modified to phosphoserine: S40 and S50. Residues 100–114 are compositionally biased toward basic and acidic residues; that stretch reads DSEKEQASLQKTEDT. A Protein kinase domain is found at 124-374; the sequence is FDIGRPLGKG…LAEVLEHPWI (251 aa). ATP is bound by residues K134, K153, and 201–204; that span reads LEYA. D247 serves as the catalytic Proton acceptor. K249 participates in a covalent cross-link: Glycyl lysine isopeptide (Lys-Gly) (interchain with G-Cter in SUMO2). ATP is bound by residues 251–252 and D265; that span reads EN. Residues 271-284 are activation segment; sequence HAPSSRRTTMCGTL. Phosphothreonine occurs at positions 278 and 279. S333 bears the Phosphoserine; by PKA and PAK mark. Over residues 376–385 the composition is skewed to polar residues; it reads ANSSKPPTGH. The interval 376–395 is disordered; the sequence is ANSSKPPTGHTSKEPTSKSS. A compositionally biased stretch (basic and acidic residues) spans 386-395; the sequence is TSKEPTSKSS.

Belongs to the protein kinase superfamily. Ser/Thr protein kinase family. Aurora subfamily. In terms of assembly, part of a complex composed of NEDD9, AURKA and CTTN; within the complex NEDD9 acts as a scaffold protein and is required for complex formation. Identified in a complex with AUNIP and NIN. Interacts with CPEB1, JTB, TACC1, TPX2, PPP2CA, as well as with the protein phosphatase type 1 (PP1) isoforms PPP1CA, PPP1CB and PPP1CC. Also interacts with its substrates ARHGEF2, BORA, KIF2A, PARD3, and p53/TP53. Interaction with BORA promotes phosphorylation of PLK1. Interacts with GADD45A, competing with its oligomerization. Interacts with FBXL7 and CIMAP3. Interacts (via C-terminus) with AUNIP (via C-terminus). Interacts with SIRT2. Interacts with FRY; this interaction facilitates AURKA-mediated PLK1 phosphorylation. Interacts with MYCN; interaction is phospho-independent and triggers AURKA activation; AURKA competes with FBXW7 for binding to unphosphorylated MYCN but not for binding to phosphorylated MYCN. Interacts with HNRNPU. Interacts with AAAS. Interacts with KLHL18 and CUL3. Interacts with FOXP1. Interacts with HDAC6; AURKA-mediated phosphorylation of HDAC6 promotes deacetylation of alpha-tubulin. Activated by phosphorylation at Thr-279; this brings about a change in the conformation of the activation segment. Phosphorylation at Thr-279 varies during the cell cycle and is highest during M phase. Autophosphorylated at Thr-279 upon TPX2 binding. Thr-279 can be phosphorylated by several kinases, including PAK and PKA. Protein phosphatase type 1 (PP1) binds AURKA and inhibits its activity by dephosphorylating Thr-279 during mitosis. Phosphorylation at Ser-333 decreases the kinase activity. PPP2CA controls degradation by dephosphorylating Ser-52 at the end of mitosis. In terms of processing, ubiquitinated by the anaphase-promoting complex (APC), leading to its degradation by the proteasome. Ubiquitinated by CHFR, leading to its degradation by the proteasome. Ubiquitinated by the E3 ubiquitin-protein ligase complex SCF(FBXL7) during mitosis, leading to its degradation by the proteasome. As to expression, detected in embryonic neurons in dorsal root ganglia and brain cortex (at protein level). Highly expressed in testis, in about one third of the seminiferous tubules. Expression is restricted to specific spermatocytes nearing completion of prophase, with levels falling off on transition to elongated spermatids. Highly expressed in the ovary, expression in the oocyte starts around the transition to large growing follicle. Abundant expression is seen in the proliferating granulosa and thecal cells of the growing follicle, and in the young corpus luteum. Very weakly expressed in spleen and intestine.

It is found in the cytoplasm. It localises to the cytoskeleton. The protein resides in the microtubule organizing center. Its subcellular location is the centrosome. The protein localises to the spindle pole. It is found in the centriole. It localises to the cell projection. The protein resides in the neuron projection. Its subcellular location is the cilium. The protein localises to the cilium basal body. It is found in the basolateral cell membrane. It carries out the reaction L-seryl-[protein] + ATP = O-phospho-L-seryl-[protein] + ADP + H(+). It catalyses the reaction L-threonyl-[protein] + ATP = O-phospho-L-threonyl-[protein] + ADP + H(+). Activation of CDK1, appears to be an upstream event of AURKA activation. Phosphatase inhibitor-2 (PPP1R2) and TPX2 act also as activators. Inactivated by the G2 checkpoint. Inhibited by GADD45A and p53/TP53, and through dephosphorylation by protein phosphatase type 1 (PP1). MLN8054 is also a potent and selective inhibitor. Activated during the early phase of cilia disassembly in the presence of CIMAP3. Inhibited by the small molecule inhibitor VX-680. In terms of biological role, mitotic serine/threonine kinase that contributes to the regulation of cell cycle progression. Associates with the centrosome and the spindle microtubules during mitosis and plays a critical role in various mitotic events including the establishment of mitotic spindle, centrosome duplication, centrosome separation as well as maturation, chromosomal alignment, spindle assembly checkpoint, and cytokinesis. Required for normal spindle positioning during mitosis and for the localization of NUMA1 and DCTN1 to the cell cortex during metaphase. Required for initial activation of CDK1 at centrosomes. Phosphorylates numerous target proteins, including ARHGEF2, BORA, BRCA1, CDC25B, DLGP5, HDAC6, KIF2A, LATS2, NDEL1, PARD3, PPP1R2, PLK1, RASSF1, TACC3, p53/TP53 and TPX2. Phosphorylates MCRS1 which is required for MCRS1-mediated kinetochore fiber assembly and mitotic progression. Regulates KIF2A tubulin depolymerase activity. Required for normal axon formation. Plays a role in microtubule remodeling during neurite extension. Important for microtubule formation and/or stabilization. Also acts as a key regulatory component of the p53/TP53 pathway, and particularly the checkpoint-response pathways critical for oncogenic transformation of cells, by phosphorylating and destabilizing p53/TP53. Phosphorylates its own inhibitors, the protein phosphatase type 1 (PP1) isoforms, to inhibit their activity. Inhibits cilia outgrowth. Required for cilia disassembly via phosphorylation of HDAC6 and subsequent deacetylation of alpha-tubulin. Regulates protein levels of the anti-apoptosis protein BIRC5 by suppressing the expression of the SCF(FBXL7) E3 ubiquitin-protein ligase substrate adapter FBXL7 through the phosphorylation of the transcription factor FOXP1. The protein is Aurora kinase A (Aurka) of Mus musculus (Mouse).